The sequence spans 492 residues: Catalase-1/2 (492 aa).

Active-site residues include histidine 65 and asparagine 138. Tyrosine 348 is a heme binding site.

It belongs to the catalase family. As to quaternary structure, homotetramer. The cofactor is heme.

The protein resides in the cytoplasm. Its subcellular location is the cytosol. It is found in the peroxisome matrix. It catalyses the reaction 2 H2O2 = O2 + 2 H2O. Functionally, catalyzes the degradation of hydrogen peroxide (H(2)O(2)) generated by peroxisomal oxidases to water and oxygen, thereby protecting cells from the toxic effects of hydrogen peroxide. The protein is Catalase-1/2 (CAT1) of Glycine max (Soybean).